We begin with the raw amino-acid sequence, 989 residues long: Serine-repeat antigen protein 5 (989 aa).

Residues 1-16 (MKSYISLFFILCVIFN) form the signal peptide. 2 disordered regions span residues 26–91 (SQTG…EKQD) and 165–245 (LPSN…RNLQ). 3 stretches are compositionally biased toward low complexity: residues 52 to 87 (QGSTGASQPGSSEPSNPVSSGHSVSTVSVSQTSTSS), 167 to 180 (SNGTTGEQGSSTGT), and 191 to 225 (SSSSSSSSSSSSSSSSSSSSSSSSSSSSSSSSSSS). Ser-167 bears the Phosphoserine mark. N-linked (GlcNAc...) asparagine glycosylation is present at Asn-168. The tract at residues 208–245 (SSSSSSSSSSSSSSSSSSESLPANGPDSPTVKPPRNLQ) is interaction with PTKL. A glycan (N-linked (GlcNAc...) asparagine) is linked at Asn-310. The segment at 365–382 (YKYLSEDIVSNFKEIKAE) is interaction with host VTN. Cysteines 437 and 489 form a disulfide. Thr-541 bears the Phosphothreonine mark. Intrachain disulfides connect Cys-559-Cys-564, Cys-573-Cys-602, Cys-585-Cys-628, Cys-619-Cys-664, and Cys-747-Cys-801. Residues 571–989 (NNCISNLQVE…TNNECYFCYV (419 aa)) are thiol-protease-like. Active-site residues include His-754 and Asn-779. N-linked (GlcNAc...) asparagine glycosylation is present at Asn-820. Residues 835–878 (KASPEFYHNLYFKNFNVGKKNLFSEKEDNENNKKLGNNYIIFGQ) constitute a propeptide, inhibition peptide. At Ser-858 the chain carries Phosphoserine.

This sequence belongs to the peptidase C1 family. As to quaternary structure, may interact (via C-terminus) with PTKL (via SAM domain). In terms of assembly, interacts (via C-terminus) with human VTN (via hemopexin repeat 2); may form heterotetramers of two VTN and SERA5 P47 heterodimers; the interaction may protect merozoites from phagocytosis by host monocytes; VTN glycosylation appears to be dispensable for the interaction. Monomer. Interacts with kinase CPK1/CDPK1 at the schizont stage. Phosphorylation by CPK1/CDPK1 increases SERA5 protease activity towards a synthetic peptide in vitro. In terms of processing, just prior to merozoite egress from host erythrocytes, proteolytically cleaved into multiple fragments. Cleaved by SUB1 into p47 and p73, p73 is further cleaved by SUB1 into p56 and p18 and p56 is further processed into p50 by an unidentified protease. p47 remains covalently associated with p18 via disulfide bond. p47 can be processed into p25n and p25c by SUB1. p25c and p25n remain associated with p18. Proteolytic processing is essential for merozoite egress from host erythrocytes. The cleavage of the propeptide to produce p50 is necessary for protease activity and to promote merozoite egress.

Its subcellular location is the parasitophorous vacuole. The protein localises to the secreted. It localises to the cell membrane. Functionally, plays an essential role during the asexual blood stage development by controlling the kinetics of merozoite egress from host erythrocytes. Specifically, prevents premature rupture of the parasitophorous vacuole and host erythrocyte membranes. In terms of biological role, may prevent merozoite phagocytosis by host monocytes via interaction with host VTN at the merozoite surface. Plays a role in parasite growth. Protease activity is controversial. This chain is Serine-repeat antigen protein 5, found in Plasmodium falciparum (isolate CDC / Honduras).